We begin with the raw amino-acid sequence, 1005 residues long: Probable histidine kinase 4 (1005 aa).

The Cytoplasmic segment spans residues 1 to 37; it reads MGVGGGGGGGGGEAAAAVAVEGDEAGKGRRWWRVKVK. The helical transmembrane segment at 38-58 threads the bilayer; that stretch reads LSTVAVVAWVLASAALWAGLH. Residues 59 to 333 lie on the Extracellular side of the membrane; that stretch reads WRFRRAALHK…YRNKLHVSWS (275 aa). Residues 110–321 enclose the CHASE domain; that stretch reads HPPALDQDTF…GDPLRKHQMV (212 aa). A helical membrane pass occupies residues 334–354; that stretch reads AITTPSGVFVICMLVGYIIYA. Over 355-1005 the chain is Cytoplasmic; it reads AWSRYDNVKE…QKFLGPCVSS (651 aa). Positions 389 to 675 constitute a Histidine kinase domain; that stretch reads TVSHEIRTPM…TFTFTAVLRR (287 aa). At His-392 the chain carries Phosphohistidine; by autocatalysis. Response regulatory domains follow at residues 700–829 and 862–999; these read SALL…FQAL and NILV…QKFL. Asp-912 is subject to 4-aspartylphosphate.

Post-translationally, activation probably requires a transfer of a phosphate group between a His in the transmitter domain and an Asp of the receiver domain. Highly expressed in young leaves and spikelets, and at lower levels in roots, mature leaves and stems.

It is found in the cell membrane. The catalysed reaction is ATP + protein L-histidine = ADP + protein N-phospho-L-histidine.. Cytokinin receptor related to bacterial two-component regulators. Functions as a histidine kinase and transmits the stress signal to a downstream MAPK cascade. The protein is Probable histidine kinase 4 of Oryza sativa subsp. japonica (Rice).